Consider the following 142-residue polypeptide: Large ribosomal subunit protein uL13 (142 aa).

This sequence belongs to the universal ribosomal protein uL13 family. As to quaternary structure, part of the 50S ribosomal subunit.

In terms of biological role, this protein is one of the early assembly proteins of the 50S ribosomal subunit, although it is not seen to bind rRNA by itself. It is important during the early stages of 50S assembly. The sequence is that of Large ribosomal subunit protein uL13 from Cronobacter sakazakii (strain ATCC BAA-894) (Enterobacter sakazakii).